A 732-amino-acid chain; its full sequence is MATKFPKFSQALASDPTTRRIWYGIATAHDFESHDGMTEENLYQKIFASHFGHLAIIFLWTSGNLFHVAWQGNFEQWVANPLKTKPLAHAIWDPHFGQAALKAFTRGDTVANISYSGVYHWWYTIGIRNNVELYTGALGLLVLSAVFLLAGWLHIQPKFKPSLSWFKNNESRLNHHLAGLFGVSSLAWTGHLVHVAIPASRGQHVGWDNFIMTPPHPAGLQPFFTGNWSVYAQSPDSMQHVFGTSQGAGTAILTFLGGFHPQTQSLWLTDMAHHHLAIAVIFIVAGHMYRTNFGIGHNLKTILEAHRPPSGRLGKGHIGIYQTLTNSLHFQLGLALASLSVVTSLVAQHMYAMPPYAYMAFDYVTQSALYTHHQYIAGLLIVGAFAHGAIFFIRDYDPEQNQDNVLARMLAHKEAVISHLSWVSLFLGFHTLGLYVHNDVVVAFGNPEKQILIEPIFAQWIQATSGKMLYGFQVLLSSSTSNASVAAQQLWLPGWLEAVNNESNSLFLTIGPGDFLVHHAIALGLHTTTLILVKGALDARGSKLMPDKKDFGYSFPCDGPGRGGTCDISAWDAFYLAMFWMLNTIGWVTFYWHWKHLSLWQGNVAQFNESSTYLMGWLRDYLWLNSSPLINGYNPYGMNSLAVWSWMFLFAHLVWATGFMFLISWRGYWQELIETLAWAHERTPLANLIRWKDKPVALSIVQARLVGLVHFTVGYILTYAAFVIASTAGKFS.

Transmembrane regions (helical) follow at residues 46–69 (IFASHFGHLAIIFLWTSGNLFHVA), 133–156 (LYTGALGLLVLSAVFLLAGWLHIQ), 173–197 (LNHHLAGLFGVSSLAWTGHLVHVAI), 271–289 (MAHHHLAIAVIFIVAGHMY), 328–351 (LHFQLGLALASLSVVTSLVAQHMY), 367–393 (SALYTHHQYIAGLLIVGAFAHGAIFFI), 415–437 (AVISHLSWVSLFLGFHTLGLYVH), and 515–533 (FLVHHAIALGLHTTTLILV). The [4Fe-4S] cluster site is built by Cys557 and Cys566. 2 helical membrane passes run 573–594 (AFYLAMFWMLNTIGWVTFYWHW) and 641–663 (LAVWSWMFLFAHLVWATGFMFLI). Chlorophyll a is bound by residues His652, Met660, and Tyr668. Trp669 lines the phylloquinone pocket. Residues 705–725 (LVGLVHFTVGYILTYAAFVIA) form a helical membrane-spanning segment.

This sequence belongs to the PsaA/PsaB family. The PsaA/B heterodimer binds the P700 chlorophyll special pair and subsequent electron acceptors. PSI consists of a core antenna complex that captures photons, and an electron transfer chain that converts photonic excitation into a charge separation. The eukaryotic PSI reaction center is composed of at least 11 subunits. Requires P700 is a chlorophyll a/chlorophyll a' dimer, A0 is one or more chlorophyll a, A1 is one or both phylloquinones and FX is a shared 4Fe-4S iron-sulfur center. as cofactor.

Its subcellular location is the plastid. The protein localises to the chloroplast thylakoid membrane. The catalysed reaction is reduced [plastocyanin] + hnu + oxidized [2Fe-2S]-[ferredoxin] = oxidized [plastocyanin] + reduced [2Fe-2S]-[ferredoxin]. In terms of biological role, psaA and PsaB bind P700, the primary electron donor of photosystem I (PSI), as well as the electron acceptors A0, A1 and FX. PSI is a plastocyanin/cytochrome c6-ferredoxin oxidoreductase, converting photonic excitation into a charge separation, which transfers an electron from the donor P700 chlorophyll pair to the spectroscopically characterized acceptors A0, A1, FX, FA and FB in turn. Oxidized P700 is reduced on the lumenal side of the thylakoid membrane by plastocyanin or cytochrome c6. In Cyanidioschyzon merolae (strain NIES-3377 / 10D) (Unicellular red alga), this protein is Photosystem I P700 chlorophyll a apoprotein A2.